Consider the following 514-residue polypeptide: Probable drug/proton antiporter YHK8 (514 aa).

Topologically, residues Met-1 to Tyr-74 are cytoplasmic. The helical transmembrane segment at Ile-75 to Leu-95 threads the bilayer. The Extracellular segment spans residues Pro-96–Ser-111. A helical transmembrane segment spans residues Thr-112–Leu-132. Residues Ser-133–Thr-141 are Cytoplasmic-facing. Residues Phe-142–Ile-162 form a helical membrane-spanning segment. Topologically, residues Thr-163 to Phe-170 are extracellular. The chain crosses the membrane as a helical span at residues Leu-171–Phe-191. Over Asp-192–Met-200 the chain is Cytoplasmic. A helical membrane pass occupies residues Ala-201–Leu-221. Residues Tyr-222 to Lys-227 lie on the Extracellular side of the membrane. Residues Trp-228–Ile-248 traverse the membrane as a helical segment. Residues Pro-249–Met-307 are Cytoplasmic-facing. The chain crosses the membrane as a helical span at residues Gly-308–Phe-328. Residues Pro-329–Glu-342 are Extracellular-facing. Residues Ile-343 to Leu-363 form a helical membrane-spanning segment. Residues Phe-364 to Glu-386 are Cytoplasmic-facing. The chain crosses the membrane as a helical span at residues Pro-387–Tyr-407. Over Lys-408–Trp-412 the chain is Extracellular. A helical membrane pass occupies residues Ile-413–Val-433. Topologically, residues Phe-434 to Ser-447 are cytoplasmic. A helical transmembrane segment spans residues Gly-448–Leu-468. Residues Gln-469–Asn-477 are Extracellular-facing. Residues Trp-478–Thr-498 traverse the membrane as a helical segment. The Cytoplasmic portion of the chain corresponds to Lys-499 to Asp-514.

Belongs to the major facilitator superfamily. CAR1 family.

The protein localises to the membrane. Its function is as follows. Probable drug/proton antiporter. This Saccharomyces cerevisiae (strain ATCC 204508 / S288c) (Baker's yeast) protein is Probable drug/proton antiporter YHK8 (YHK8).